The sequence spans 140 residues: L-fucose mutarotase (140 aa).

His22 acts as the Proton donor in catalysis. Substrate contacts are provided by residues Asp30, Arg107, and 129–131; that span reads YGN.

This sequence belongs to the RbsD / FucU family. FucU mutarotase subfamily. In terms of assembly, homodecamer.

The protein resides in the cytoplasm. It catalyses the reaction alpha-L-fucose = beta-L-fucose. It functions in the pathway carbohydrate metabolism; L-fucose metabolism. Its function is as follows. Involved in the anomeric conversion of L-fucose. This chain is L-fucose mutarotase, found in Salmonella paratyphi B (strain ATCC BAA-1250 / SPB7).